The sequence spans 174 residues: Co-chaperone protein HscB homolog (174 aa).

Positions 2 to 74 (NYFELFKFSP…IRRAEHMLSL (73 aa)) constitute a J domain.

Belongs to the HscB family. In terms of assembly, interacts with HscA and stimulates its ATPase activity.

Co-chaperone involved in the maturation of iron-sulfur cluster-containing proteins. Seems to help targeting proteins to be folded toward HscA. In Shewanella sp. (strain ANA-3), this protein is Co-chaperone protein HscB homolog.